Consider the following 137-residue polypeptide: Basic phospholipase A2 3 (137 aa).

An N-terminal signal peptide occupies residues 1–11 (LVAVCVSLLGA). The propeptide occupies 12–19 (ANIPPQPL). Cystine bridges form between cysteine 30-cysteine 89, cysteine 44-cysteine 136, cysteine 46-cysteine 62, cysteine 61-cysteine 117, cysteine 68-cysteine 110, cysteine 78-cysteine 103, and cysteine 96-cysteine 108. Ca(2+) is bound by residues tyrosine 45, glycine 47, and glycine 49. Residue histidine 65 is part of the active site. Aspartate 66 provides a ligand contact to Ca(2+). Aspartate 111 is an active-site residue.

This sequence belongs to the phospholipase A2 family. Group I subfamily. D49 sub-subfamily. Monomer, or homotrimer. Was firstly described as a trimer, but has been reinterpreted with the possibility of being a monomer. Ca(2+) is required as a cofactor. In terms of tissue distribution, expressed by the venom gland.

It is found in the secreted. The catalysed reaction is a 1,2-diacyl-sn-glycero-3-phosphocholine + H2O = a 1-acyl-sn-glycero-3-phosphocholine + a fatty acid + H(+). In terms of biological role, snake venom phospholipase A2 (PLA2) that shows anticoagulant and neurotoxic activities. PLA2 catalyzes the calcium-dependent hydrolysis of the 2-acyl groups in 3-sn-phosphoglycerides. The protein is Basic phospholipase A2 3 of Bungarus caeruleus (Indian krait).